A 270-amino-acid polypeptide reads, in one-letter code: Glucosamine-6-phosphate deaminase (270 aa).

Aspartate 72 (proton acceptor; for enolization step) is an active-site residue. Aspartate 141 serves as the catalytic For ring-opening step. Histidine 143 acts as the Proton acceptor; for ring-opening step in catalysis. The For ring-opening step role is filled by glutamate 148.

The protein belongs to the glucosamine/galactosamine-6-phosphate isomerase family. NagB subfamily. Homohexamer.

The enzyme catalyses alpha-D-glucosamine 6-phosphate + H2O = beta-D-fructose 6-phosphate + NH4(+). Its pathway is amino-sugar metabolism; N-acetylneuraminate degradation; D-fructose 6-phosphate from N-acetylneuraminate: step 5/5. Its activity is regulated as follows. Allosterically activated by N-acetylglucosamine 6-phosphate (GlcNAc6P). Functionally, catalyzes the reversible isomerization-deamination of glucosamine 6-phosphate (GlcN6P) to form fructose 6-phosphate (Fru6P) and ammonium ion. This Haemophilus influenzae (strain PittEE) protein is Glucosamine-6-phosphate deaminase.